The chain runs to 110 residues: DNA-binding protein Pars_1791 (110 aa).

This sequence belongs to the PDCD5 family.

In Pyrobaculum arsenaticum (strain DSM 13514 / JCM 11321 / PZ6), this protein is DNA-binding protein Pars_1791.